The following is a 572-amino-acid chain: Proline--tRNA ligase (572 aa).

It belongs to the class-II aminoacyl-tRNA synthetase family. ProS type 1 subfamily. As to quaternary structure, homodimer.

It is found in the cytoplasm. The enzyme catalyses tRNA(Pro) + L-proline + ATP = L-prolyl-tRNA(Pro) + AMP + diphosphate. Its function is as follows. Catalyzes the attachment of proline to tRNA(Pro) in a two-step reaction: proline is first activated by ATP to form Pro-AMP and then transferred to the acceptor end of tRNA(Pro). As ProRS can inadvertently accommodate and process non-cognate amino acids such as alanine and cysteine, to avoid such errors it has two additional distinct editing activities against alanine. One activity is designated as 'pretransfer' editing and involves the tRNA(Pro)-independent hydrolysis of activated Ala-AMP. The other activity is designated 'posttransfer' editing and involves deacylation of mischarged Ala-tRNA(Pro). The misacylated Cys-tRNA(Pro) is not edited by ProRS. This chain is Proline--tRNA ligase, found in Yersinia pseudotuberculosis serotype IB (strain PB1/+).